The chain runs to 173 residues: Small ribosomal subunit protein uS7 (173 aa).

The protein belongs to the universal ribosomal protein uS7 family. In terms of assembly, part of the 30S ribosomal subunit. Contacts proteins S9 and S11.

Its function is as follows. One of the primary rRNA binding proteins, it binds directly to 16S rRNA where it nucleates assembly of the head domain of the 30S subunit. Is located at the subunit interface close to the decoding center, probably blocks exit of the E-site tRNA. The protein is Small ribosomal subunit protein uS7 of Orientia tsutsugamushi (strain Ikeda) (Rickettsia tsutsugamushi).